A 942-amino-acid chain; its full sequence is DDB1- and CUL4-associated factor 5 (942 aa).

6 WD repeats span residues 51 to 91, 99 to 139, 140 to 180, 185 to 225, 277 to 317, and 331 to 370; these read GHFG…HSRV, EHHS…LDVF, AHED…HGEP, NYPS…SSLL, FNSC…EAGG, and GHRS…GCTG. 2 disordered regions span residues 449 to 478 and 490 to 509; these read GVSE…ESAD and TTNT…AASR. Residues 454–465 show a composition bias toward polar residues; sequence SGYTDSESSASL. The residue at position 500 (T500) is a Phosphothreonine. Phosphoserine occurs at positions 531, 533, 626, 628, 645, 648, and 651. Disordered stretches follow at residues 544–655, 676–824, and 889–942; these read TDLF…DIES, NNKD…EERS, and ACET…KLKT. Residues 625–641 show a composition bias toward low complexity; sequence LSSSPTSSPERSTSTLE. Composition is skewed to basic and acidic residues over residues 690–701 and 728–738; these read DEGRAGTSHKDN and CSKDTFKEETP. The segment covering 760 to 770 has biased composition (polar residues); sequence GTSQDTGNSGS. Phosphoserine is present on S794. Over residues 801-815 the composition is skewed to polar residues; that stretch reads SGSTLNSGSGNCPRT.

Interacts with DDB1, CUL4A or CUL4B. Interacts with L3MBTL3. Interacts with DNMT1. Interacts with E2F1. Interacts with SOX2. As to expression, ubiquitous.

Its pathway is protein modification; protein ubiquitination. In terms of biological role, is a substrate receptor for the CUL4-DDB1 E3 ubiquitin-protein ligase complex (CRL4). The complex CRL4-DCAF5 is involved in the ubiquitination of a set of methylated non-histone proteins, including SOX2, DNMT1 and E2F1. In Homo sapiens (Human), this protein is DDB1- and CUL4-associated factor 5 (DCAF5).